The primary structure comprises 258 residues: Distal membrane-arm assembly complex protein 2 (258 aa).

The protein belongs to the ATP synthase subunit s family. As to quaternary structure, interacts with incompletely assembled mitochondrial NADH:ubiquinone oxidoreductase complex (complex I).

The protein localises to the mitochondrion. Functionally, required for the assembly of the mitochondrial NADH:ubiquinone oxidoreductase complex (complex I). Involved in the assembly of the distal region of complex I. This chain is Distal membrane-arm assembly complex protein 2 (Dmac2), found in Mus musculus (Mouse).